Here is a 463-residue protein sequence, read N- to C-terminus: Na(+)/H(+) antiporter NhaA 3 (463 aa).

Helical transmembrane passes span 28 to 48 (FLAT…AALL), 79 to 99 (LHHW…GLEI), 114 to 134 (IAVP…IYFV), 144 to 164 (GWGI…ALFG), 173 to 193 (LFLL…VGIF), 196 to 216 (DHLN…ILGL), 232 to 252 (LVLW…GVLV), 305 to 325 (VLHP…NAGV), 344 to 364 (VAAA…VAAI), 377 to 397 (YGHL…SLFI), and 413 to 433 (IGIL…LRVL). Residues 444–463 (TDEPVPRLPPRPWRAPVPAK) form a disordered region. Residues 449–463 (PRLPPRPWRAPVPAK) show a composition bias toward pro residues.

Belongs to the NhaA Na(+)/H(+) (TC 2.A.33) antiporter family.

It localises to the cell membrane. The enzyme catalyses Na(+)(in) + 2 H(+)(out) = Na(+)(out) + 2 H(+)(in). Functionally, na(+)/H(+) antiporter that extrudes sodium in exchange for external protons. This chain is Na(+)/H(+) antiporter NhaA 3, found in Frankia alni (strain DSM 45986 / CECT 9034 / ACN14a).